We begin with the raw amino-acid sequence, 424 residues long: Serine incorporator 5 (424 aa).

Over 1–6 the chain is Extracellular; that stretch reads MYALYF. The helical transmembrane segment at 7–23 threads the bilayer; it reads ILVVVLCCIMMSTTVAH. Residues 24 to 52 lie on the Cytoplasmic side of the membrane; that stretch reads KMKEHIPFFEDMCKGIKAGDTCEKLVGYS. Residues 53–73 traverse the membrane as a helical segment; the sequence is AVYRVCFGMACFFFIFCLLTL. Over 74–87 the chain is Extracellular; it reads KINNSKSCRAHIHN. Asparagine 76 carries an N-linked (GlcNAc...) asparagine glycan. Residues 88–108 form a helical membrane-spanning segment; the sequence is GFWFFKLLLLGAMCSGAFFIP. Residues 109–119 lie on the Cytoplasmic side of the membrane; sequence DQDTFLNAWRY. A helical transmembrane segment spans residues 120 to 140; the sequence is VGAVGGFLFIGIQLLLLVEFA. The Extracellular segment spans residues 141-161; sequence HKWNKNWTAGTASNKLWYASL. Asparagine 146 carries an N-linked (GlcNAc...) asparagine glycan. A helical transmembrane segment spans residues 162 to 182; it reads ALVTLIMYSIATGGLVLMAVF. Residues 183–193 lie on the Cytoplasmic side of the membrane; it reads YTQKDGCMENK. A helical membrane pass occupies residues 194-214; the sequence is ILLGVNGGLCVLISLVAISPC. Residues 215–221 lie on the Extracellular side of the membrane; it reads VQNRQPH. The chain crosses the membrane as a helical span at residues 222–242; the sequence is SGLLQSGVISCYVTYLTFSAL. Topologically, residues 243-274 are cytoplasmic; it reads SSKPAEVVLDEHGKNVTICVPDFGQDLYRDEN. The chain crosses the membrane as a helical span at residues 275–295; it reads LVTILGTSLLIGCILYSCLTS. Over 296-348 the chain is Extracellular; that stretch reads TTRSSSDALQGRYAAPELEIARCCFCFSPGGEDTEEQQQGKEGPRVIYDEKKG. A helical membrane pass occupies residues 349–369; sequence TVYIYSYFHFVFFLASLYVMM. Residues 370 to 391 are Cytoplasmic-facing; that stretch reads TVTNWFNYESANIESFFSGSWS. Residues 392 to 412 form a helical membrane-spanning segment; sequence IFWVKMASCWICVLLYLCTLV. At 413 to 424 the chain is on the extracellular side; the sequence is APLCCPTREFSV.

It belongs to the TDE1 family.

Its subcellular location is the cell membrane. The catalysed reaction is a 1,2-diacyl-sn-glycero-3-phospho-L-serine(in) = a 1,2-diacyl-sn-glycero-3-phospho-L-serine(out). It carries out the reaction a 1,2-diacyl-sn-glycero-3-phosphocholine(in) = a 1,2-diacyl-sn-glycero-3-phosphocholine(out). It catalyses the reaction a 1,2-diacyl-sn-glycero-3-phosphoethanolamine(in) = a 1,2-diacyl-sn-glycero-3-phosphoethanolamine(out). Functionally, restriction factor required to restrict infectivity of gammaretroviruses: acts by inhibiting an early step of viral infection. Impairs the penetration of the viral particle into the cytoplasm. Non-ATP-dependent, non-specific lipid transporter for phosphatidylserine, phosphatidylcholine, and phosphatidylethanolamine. Functions as a scramblase that flips lipids in both directions across the membrane. Phospholipid scrambling results in gammaretroviral surface exposure of phosphatidylserine and loss of membrane asymmetry, which leads to loss of infectivity. Enhances the incorporation of serine into phosphatidylserine and sphingolipids. May play a role in providing serine molecules for the formation of myelin glycosphingolipids in oligodendrocytes. The protein is Serine incorporator 5 (SERINC5) of Macaca fascicularis (Crab-eating macaque).